The primary structure comprises 463 residues: Argininosuccinate lyase (463 aa).

The protein belongs to the lyase 1 family. Argininosuccinate lyase subfamily.

The protein resides in the cytoplasm. The catalysed reaction is 2-(N(omega)-L-arginino)succinate = fumarate + L-arginine. The protein operates within amino-acid biosynthesis; L-arginine biosynthesis; L-arginine from L-ornithine and carbamoyl phosphate: step 3/3. This chain is Argininosuccinate lyase, found in Streptococcus pneumoniae serotype 2 (strain D39 / NCTC 7466).